We begin with the raw amino-acid sequence, 1392 residues long: ATP-dependent helicase/nuclease subunit A (1392 aa).

The UvrD-like helicase ATP-binding domain occupies 3 to 489; that stretch reads NPKWTPAQQA…IDLNQNFRSR (487 aa). Residue 24–31 participates in ATP binding; the sequence is AAAGSGKT. 3 disordered regions span residues 291–319, 556–594, and 1051–1126; these read RGSK…KARD, RGAE…LEEA, and GPVQ…LDTK. 2 stretches are compositionally biased toward basic and acidic residues: residues 305–319 and 569–583; these read ENSK…KARD and AKGE…REPE. A UvrD-like helicase C-terminal domain is found at 556 to 886; the sequence is RGAEDAATGA…RFITVHSSKG (331 aa). A compositionally biased stretch (acidic residues) spans 584–594; the sequence is SGDDESSLEEA. Positions 1088 to 1113 are enriched in basic and acidic residues; sequence ASGKTEIPGETKNSEETKTSEDKKNL.

It belongs to the helicase family. AddA subfamily. In terms of assembly, heterodimer of AddA and AddB/RexB. The cofactor is Mg(2+).

It catalyses the reaction Couples ATP hydrolysis with the unwinding of duplex DNA by translocating in the 3'-5' direction.. The enzyme catalyses ATP + H2O = ADP + phosphate + H(+). Functionally, the heterodimer acts as both an ATP-dependent DNA helicase and an ATP-dependent, dual-direction single-stranded exonuclease. Recognizes the chi site generating a DNA molecule suitable for the initiation of homologous recombination. The AddA nuclease domain is required for chi fragment generation; this subunit has the helicase and 3' -&gt; 5' nuclease activities. This is ATP-dependent helicase/nuclease subunit A from Desulfitobacterium hafniense (strain Y51).